The sequence spans 743 residues: Ribosome biogenesis protein BOP1 homolog (743 aa).

WD repeat units lie at residues 365–404 (GHTATVRSVSVSPNGQYLATGCDDHLVRVYEVQTGRLMKR), 575–615 (KFSE…RRFK), 617–655 (SGGVTTCLSIHPEGDNFLVGDTTSHTSWFDMDFSDKPYK), 659–701 (SHKG…DYNK), and 712–743 (KHQRSVYAVAWHPSLAWLFTSTEDGVVTAWTE).

This sequence belongs to the WD repeat BOP1/ERB1 family.

The protein localises to the nucleus. Its subcellular location is the nucleolus. It is found in the nucleoplasm. In terms of biological role, required for maturation of ribosomal RNAs and formation of the large ribosomal subunit. The chain is Ribosome biogenesis protein BOP1 homolog from Leishmania braziliensis.